The sequence spans 107 residues: Acetyl-CoA acetyltransferase (107 aa).

Cysteine 88 (acyl-thioester intermediate) is an active-site residue.

The protein belongs to the thiolase-like superfamily. Thiolase family. In terms of assembly, homotetramer.

Its subcellular location is the cytoplasm. It catalyses the reaction 2 acetyl-CoA = acetoacetyl-CoA + CoA. In terms of biological role, catalyzes the condensation of two molecules of acetyl-CoA to produce acetoacetyl-CoA. The polypeptide is Acetyl-CoA acetyltransferase (thi) (Clostridioides difficile (Peptoclostridium difficile)).